We begin with the raw amino-acid sequence, 370 residues long: Anhydro-N-acetylmuramic acid kinase (370 aa).

Residue 13-20 (GTSLDGVD) participates in ATP binding.

It belongs to the anhydro-N-acetylmuramic acid kinase family.

The catalysed reaction is 1,6-anhydro-N-acetyl-beta-muramate + ATP + H2O = N-acetyl-D-muramate 6-phosphate + ADP + H(+). It functions in the pathway amino-sugar metabolism; 1,6-anhydro-N-acetylmuramate degradation. Its pathway is cell wall biogenesis; peptidoglycan recycling. In terms of biological role, catalyzes the specific phosphorylation of 1,6-anhydro-N-acetylmuramic acid (anhMurNAc) with the simultaneous cleavage of the 1,6-anhydro ring, generating MurNAc-6-P. Is required for the utilization of anhMurNAc either imported from the medium or derived from its own cell wall murein, and thus plays a role in cell wall recycling. The chain is Anhydro-N-acetylmuramic acid kinase from Vibrio cholerae serotype O1 (strain ATCC 39315 / El Tor Inaba N16961).